A 29-amino-acid polypeptide reads, in one-letter code: Cytochrome b6-f complex subunit 8 (29 aa).

The chain crosses the membrane as a helical span at residues 3 to 23 (IVSLAWAALMVVFTFSLSLVV).

The protein belongs to the PetN family. In terms of assembly, the 4 large subunits of the cytochrome b6-f complex are cytochrome b6, subunit IV (17 kDa polypeptide, PetD), cytochrome f and the Rieske protein, while the 4 small subunits are PetG, PetL, PetM and PetN. The complex functions as a dimer.

It is found in the plastid. The protein resides in the chloroplast thylakoid membrane. Component of the cytochrome b6-f complex, which mediates electron transfer between photosystem II (PSII) and photosystem I (PSI), cyclic electron flow around PSI, and state transitions. The sequence is that of Cytochrome b6-f complex subunit 8 from Solanum bulbocastanum (Wild potato).